A 1057-amino-acid polypeptide reads, in one-letter code: Structural maintenance of chromosomes protein 6B (1057 aa).

The 1026-residue stretch at 22 to 1047 (ILRIKVENFM…ISMVKSHERI (1026 aa)) folds into the Zinc-hook domain. Residue 49–56 (GQNGSGKS) participates in ATP binding. A coiled-coil region spans residues 135-448 (KVSNKRDELR…NDLKKHQTNK (314 aa)). A flexible hinge region spans residues 449–632 (VTAFGGDRVI…PPLSRRPSRL (184 aa)). A coiled-coil region spans residues 633–904 (CASFDDQIKD…QDHREKLMAC (272 aa)). Positions 818-828 (KNKRKESDQKA) are enriched in basic and acidic residues. The tract at residues 818–845 (KNKRKESDQKASEICPESEIESLGPWDG) is disordered.

It belongs to the SMC family. SMC6 subfamily. Forms a heterodimer with SMC5. The SMC5-SMC6 complex is composed of the SMC5 and SMC6 heterodimer attached via their hinge domain and from the non-SMC subunit NSE4A or NSE4B. In terms of tissue distribution, expressed in seedlings, rosette leaves and floral buds.

Its subcellular location is the nucleus. It localises to the chromosome. In terms of biological role, core component of the SMC5-SMC6 complex that promotes sister chromatid alignment after DNA damage and facilitates double-stranded DNA breaks (DSBs) repair via homologous recombination between sister chromatids. The chain is Structural maintenance of chromosomes protein 6B (SMC6B) from Arabidopsis thaliana (Mouse-ear cress).